The chain runs to 205 residues: High frequency lysogenization protein HflD homolog (205 aa).

It belongs to the HflD family.

Its subcellular location is the cytoplasm. The protein resides in the cell inner membrane. This is High frequency lysogenization protein HflD homolog from Hahella chejuensis (strain KCTC 2396).